A 213-amino-acid polypeptide reads, in one-letter code: Major fimbrial subunit (213 aa).

Residues 1–20 (MKKTLLGSLILLAFAGNVQA) form the signal peptide. Cysteines 41 and 81 form a disulfide.

Belongs to the fimbrial protein family.

The protein localises to the fimbrium. Its function is as follows. Mediates adherence to oropharyngeal epithelial cells. Helps the airway colonization process. The chain is Major fimbrial subunit (hifA) from Haemophilus influenzae.